Reading from the N-terminus, the 426-residue chain is MALIDAIHAREILDSRGNPTVEVEVLLSDGQIGRAAVPSGASTGEHEAVELRDGDKGRYLGKGVQKAVDAVIDQIAPALTGFDATDQRSIDQAMIDLDGTPNKSKLGANAILGVSLAVANAAAASADLPLYKYLGGPNAHVLPVPLMNILNGGSHADSDVDIQEFMIAPIGAETFSEGLRWGVEVYHNLKSVLQAKGLSTGLGDEGGFAPNLPSNRAALDLIQEAIKNAGYIPGKDIALALDVASSEFFKDGAYQFEGKALSATEMSAYYAELVADYPLVSIEDPLDENDWEGWKTLTDAIGDKVQLVGDDLFVTNPSILQRGIDTATANSLLVKVNQIGSLTETLDAVSLAQRAGYTTITSHRSGETEDTTIADIAVATNAGQIKTGAPARSERVAKYNQLLRIEEELDDAARYAGRSAFPRFKG.

(2R)-2-phosphoglycerate is bound at residue Gln163. Glu205 serves as the catalytic Proton donor. Mg(2+) is bound by residues Asp242, Glu283, and Asp310. The (2R)-2-phosphoglycerate site is built by Lys335, Arg364, Ser365, and Lys386. The Proton acceptor role is filled by Lys335.

It belongs to the enolase family. Mg(2+) serves as cofactor.

Its subcellular location is the cytoplasm. The protein localises to the secreted. The protein resides in the cell surface. The enzyme catalyses (2R)-2-phosphoglycerate = phosphoenolpyruvate + H2O. It functions in the pathway carbohydrate degradation; glycolysis; pyruvate from D-glyceraldehyde 3-phosphate: step 4/5. Its function is as follows. Catalyzes the reversible conversion of 2-phosphoglycerate (2-PG) into phosphoenolpyruvate (PEP). It is essential for the degradation of carbohydrates via glycolysis. The sequence is that of Enolase from Arthrobacter sp. (strain FB24).